The primary structure comprises 222 residues: uncharacterized protein (222 aa).

Residues 8 to 77 form the HTH gntR-type domain; sequence AKKGQIIYRY…GNAGYFVAKN (70 aa).

This is an uncharacterized protein from Mycoplasma pneumoniae (strain ATCC 29342 / M129 / Subtype 1) (Mycoplasmoides pneumoniae).